The primary structure comprises 433 residues: Peptidoglycan glycosyltransferase RodA (433 aa).

12 helical membrane-spanning segments follow: residues 9–29 (FDYLLLLTMLALTSIGILFIY), 44–64 (YLKQIVWAVMGVVLMLSVSMY), 74–94 (TLIFAGFILLLIYTRLFGRYV), 100–120 (WIGVGEFGIQISEFAKIAYIL), 158–178 (LGTASVYLPIFLVMCFIAGFP), 181–201 (LIFAVVCVVLLTLLFTLLPLW), 221–241 (LSLFVFFSLSATSAVAVVGYL), 249–269 (YWITYALGMVSISYGASLLGV), 295–315 (WHIIQSMIAIGSGGAFGMGYL), 341–361 (WGFVGGVIVFGLYLLFFLHTL), 378–398 (GVLGMFLFHFVVNVGMTMGIM), and 400–420 (ITGIPLLLLSYGGSSLWTAMI).

Belongs to the SEDS family. MrdB/RodA subfamily.

Its subcellular location is the cell inner membrane. It carries out the reaction [GlcNAc-(1-&gt;4)-Mur2Ac(oyl-L-Ala-gamma-D-Glu-L-Lys-D-Ala-D-Ala)](n)-di-trans,octa-cis-undecaprenyl diphosphate + beta-D-GlcNAc-(1-&gt;4)-Mur2Ac(oyl-L-Ala-gamma-D-Glu-L-Lys-D-Ala-D-Ala)-di-trans,octa-cis-undecaprenyl diphosphate = [GlcNAc-(1-&gt;4)-Mur2Ac(oyl-L-Ala-gamma-D-Glu-L-Lys-D-Ala-D-Ala)](n+1)-di-trans,octa-cis-undecaprenyl diphosphate + di-trans,octa-cis-undecaprenyl diphosphate + H(+). It participates in cell wall biogenesis; peptidoglycan biosynthesis. In terms of biological role, peptidoglycan polymerase that is essential for cell wall elongation. The chain is Peptidoglycan glycosyltransferase RodA from Treponema pallidum (strain Nichols).